Here is a 297-residue protein sequence, read N- to C-terminus: tRNA dimethylallyltransferase (297 aa).

10 to 17 is a binding site for ATP; that stretch reads GITASGKS. 12–17 provides a ligand contact to substrate; sequence TASGKS. Residues 36-39 are interaction with substrate tRNA; sequence DSKQ.

The protein belongs to the IPP transferase family. Monomer. Mg(2+) is required as a cofactor.

It carries out the reaction adenosine(37) in tRNA + dimethylallyl diphosphate = N(6)-dimethylallyladenosine(37) in tRNA + diphosphate. In terms of biological role, catalyzes the transfer of a dimethylallyl group onto the adenine at position 37 in tRNAs that read codons beginning with uridine, leading to the formation of N6-(dimethylallyl)adenosine (i(6)A). In Wolbachia pipientis wMel, this protein is tRNA dimethylallyltransferase.